A 228-amino-acid polypeptide reads, in one-letter code: PKHD-type hydroxylase Vapar_1809 (228 aa).

In terms of domain architecture, Fe2OG dioxygenase spans 78-179 (QISPPLFNRY…RTASYFWIQS (102 aa)). Residues His97, Asp99, and His160 each contribute to the Fe cation site. Position 170 (Arg170) interacts with 2-oxoglutarate.

It depends on Fe(2+) as a cofactor. L-ascorbate serves as cofactor.

The sequence is that of PKHD-type hydroxylase Vapar_1809 from Variovorax paradoxus (strain S110).